Here is a 458-residue protein sequence, read N- to C-terminus: Cysteine--tRNA ligase (458 aa).

Zn(2+) is bound at residue Cys-27. The short motif at Met-29 to His-39 is the 'HIGH' region element. Zn(2+) is bound by residues Cys-208, His-233, and Glu-237. Residues Lys-265–Ser-269 carry the 'KMSKS' region motif. Lys-268 contributes to the ATP binding site.

The protein belongs to the class-I aminoacyl-tRNA synthetase family. As to quaternary structure, monomer. Zn(2+) is required as a cofactor.

It is found in the cytoplasm. It catalyses the reaction tRNA(Cys) + L-cysteine + ATP = L-cysteinyl-tRNA(Cys) + AMP + diphosphate. This is Cysteine--tRNA ligase from Coxiella burnetii (strain Dugway 5J108-111).